We begin with the raw amino-acid sequence, 277 residues long: Large ribosomal subunit protein uL2 (277 aa).

Positions 218 to 277 are disordered; sequence PTVRGSVMNPNDHPHGGGEGKSPIGHPSPLTPWGKPALGYKTRKNKKYSDGMIIKRRGQK.

This sequence belongs to the universal ribosomal protein uL2 family. As to quaternary structure, part of the 50S ribosomal subunit. Forms a bridge to the 30S subunit in the 70S ribosome.

Functionally, one of the primary rRNA binding proteins. Required for association of the 30S and 50S subunits to form the 70S ribosome, for tRNA binding and peptide bond formation. It has been suggested to have peptidyltransferase activity; this is somewhat controversial. Makes several contacts with the 16S rRNA in the 70S ribosome. The polypeptide is Large ribosomal subunit protein uL2 (Clostridium novyi (strain NT)).